Reading from the N-terminus, the 281-residue chain is VGFVIVTFQEQGESEYKNCELDKNQRQCVQYALKARPLRRYIPKNPYQYQIWYVVTSSYFEYLMFFLIMLNTICLGMQHYNQSAEMNHVSDILNVAFTVLFTLEMILKLMAFKAKGYFGDPWNVFDFLIVIGSIIDVILSEIDDPDDNSRVSITFFRLFRVMRLVKLLSRGEGVRTLLWTFIKSFQALPYVALLIVMLFFIYAVIGMQMFGKIAMVDGTQINRNNNFQTFPQAVLLLFRCATGEAWQEILLDCSYGKRCDPESDYAEGEEYTCGTGFAYFY.

Residues 1–8 (VGFVIVTF) form an III repeat. A dihydropyridine binding region spans residues 1-17 (VGFVIVTFQEQGESEYK). Residues 45 to 281 (NPYQYQIWYV…TCGTGFAYFY (237 aa)) form an IV repeat. A helical transmembrane segment spans residues 59–80 (YFEYLMFFLIMLNTICLGMQHY). A glycan (N-linked (GlcNAc...) asparagine) is linked at N81. A helical membrane pass occupies residues 89-110 (VSDILNVAFTVLFTLEMILKLM). Residues 121–140 (PWNVFDFLIVIGSIIDVILS) form a helical membrane-spanning segment. Residues 153–171 (ITFFRLFRVMRLVKLLSRG) form a helical membrane-spanning segment. A helical membrane pass occupies residues 190-210 (YVALLIVMLFFIYAVIGMQMF). An intramembrane region (pore-forming) is located at residues 233–251 (AVLLLFRCATGEAWQEILL). A Selectivity filter of repeat IV motif is present at residues 242-245 (TGEA). The tract at residues 258–281 (RCDPESDYAEGEEYTCGTGFAYFY) is dihydropyridine binding. C259 and C273 are disulfide-bonded. The segment at 270-281 (EYTCGTGFAYFY) is phenylalkylamine binding.

It belongs to the calcium channel alpha-1 subunit (TC 1.A.1.11) family. CACNA1S subfamily. In terms of assembly, component of a calcium channel complex consisting of a pore-forming alpha subunit (CACNA1S) and the ancillary subunits CACNB1 or CACNB2, CACNG1 and CACNA2D1. The channel complex contains alpha, beta, gamma and delta subunits in a 1:1:1:1 ratio, i.e. it contains either CACNB1 or CACNB2. CACNA1S channel activity is modulated by the auxiliary subunits (CACNB1 or CACNB2, CACNG1 and CACNA2D1). Interacts with DYSF and JSRP1. Interacts with RYR1. Interacts with CALM. The alpha-1S subunit is found in two isoforms in the skeletal muscle: a minor form of 212 kDa containing the complete amino acid sequence, and a major form of 190 kDa derived from the full-length form by post-translational proteolysis close to Phe-1690. In terms of processing, both the minor and major forms are phosphorylated in vitro by PKA. Phosphorylation by PKA activates the calcium channel.

The protein resides in the cell membrane. It is found in the sarcolemma. It localises to the T-tubule. The enzyme catalyses Ca(2+)(in) = Ca(2+)(out). Its activity is regulated as follows. Channel activity is blocked by dihydropyridines (DHP), phenylalkylamines, and by benzothiazepines. Functionally, pore-forming, alpha-1S subunit of the voltage-gated calcium channel that gives rise to L-type calcium currents in skeletal muscle. Calcium channels containing the alpha-1S subunit play an important role in excitation-contraction coupling in skeletal muscle via their interaction with RYR1, which triggers Ca(2+) release from the sarcplasmic reticulum and ultimately results in muscle contraction. Long-lasting (L-type) calcium channels belong to the 'high-voltage activated' (HVA) group. The protein is Voltage-dependent L-type calcium channel subunit alpha-1S (CACNA1S) of Gallus gallus (Chicken).